Here is a 232-residue protein sequence, read N- to C-terminus: Phosphatidylserine decarboxylase proenzyme (232 aa).

The active-site Schiff-base intermediate with substrate; via pyruvic acid is the Ser190. At Ser190 the chain carries Pyruvic acid (Ser); by autocatalysis.

Belongs to the phosphatidylserine decarboxylase family. PSD-A subfamily. Heterodimer of a large membrane-associated beta subunit and a small pyruvoyl-containing alpha subunit. Pyruvate is required as a cofactor. In terms of processing, is synthesized initially as an inactive proenzyme. Formation of the active enzyme involves a self-maturation process in which the active site pyruvoyl group is generated from an internal serine residue via an autocatalytic post-translational modification. Two non-identical subunits are generated from the proenzyme in this reaction, and the pyruvate is formed at the N-terminus of the alpha chain, which is derived from the carboxyl end of the proenzyme. The post-translation cleavage follows an unusual pathway, termed non-hydrolytic serinolysis, in which the side chain hydroxyl group of the serine supplies its oxygen atom to form the C-terminus of the beta chain, while the remainder of the serine residue undergoes an oxidative deamination to produce ammonia and the pyruvoyl prosthetic group on the alpha chain.

The protein localises to the cell membrane. The enzyme catalyses a 1,2-diacyl-sn-glycero-3-phospho-L-serine + H(+) = a 1,2-diacyl-sn-glycero-3-phosphoethanolamine + CO2. The protein operates within phospholipid metabolism; phosphatidylethanolamine biosynthesis; phosphatidylethanolamine from CDP-diacylglycerol: step 2/2. Functionally, catalyzes the formation of phosphatidylethanolamine (PtdEtn) from phosphatidylserine (PtdSer). The polypeptide is Phosphatidylserine decarboxylase proenzyme (Methylocella silvestris (strain DSM 15510 / CIP 108128 / LMG 27833 / NCIMB 13906 / BL2)).